A 49-amino-acid chain; its full sequence is Delta-actitoxin-Axm1a (49 aa).

Cystine bridges form between Cys4/Cys46, Cys6/Cys36, and Cys29/Cys47.

The protein belongs to the sea anemone sodium channel inhibitory toxin family. Type I subfamily.

The protein resides in the secreted. The protein localises to the nematocyst. In terms of biological role, binds specifically to voltage-gated sodium channels (Nav) (site 3), thereby delaying their inactivation. This toxin retains the greatest capacity to discriminate between the cardiac (Nav1.5/SCN5A) and neuronal sodium channels (2.5 nM versus 120 nM, when electrophysiologically tested and 14 nM versus 400 nM, when tested by ion flux), whereas its paralog Anthopleurin-B has the highest affinity of all anemone toxins for the mammalian sodium channel. Its ability to differentiate between cardiac and skeletal channels appears to be associated with domain 4 of the channel. This toxin does not slow or inhibit closed-state inactivation of cardiac sodium channels, but selectively modifies inactivation from the open-state. It does not display phospholipid-binding activities, suggesting that the domain IV S3-S4 linker is located at the extracellular surface and not buried in the phospholipid bilayer. This chain is Delta-actitoxin-Axm1a, found in Anthopleura xanthogrammica (Giant green sea anemone).